The chain runs to 146 residues: MMHMTFYWGIKATILFDFWKTDSWLSYILTLIACFVFSAFYQYLENRRIQFKSLSSSRRAPPPPRSSSGVSAPLIPKSGTRSAAKAASVLLFGVNAAIGYLLMLAAMSFNGGVFIAIVVGLTAGYAVFRSDDGGADTATDDPCPCA.

The helical transmembrane segment at 24 to 44 (WLSYILTLIACFVFSAFYQYL) threads the bilayer. Residues 55 to 74 (SSSRRAPPPPRSSSGVSAPL) form a disordered region. The chain crosses the membrane as a helical span at residues 101 to 121 (LLMLAAMSFNGGVFIAIVVGL).

The protein belongs to the copper transporter (Ctr) (TC 1.A.56) family. SLC31A subfamily. In terms of tissue distribution, highly expressed in leaves and stems and at lower levels in roots and flowers.

It localises to the membrane. Involved in the transport of copper. This chain is Copper transporter 5 (COPT5), found in Arabidopsis thaliana (Mouse-ear cress).